Consider the following 448-residue polypeptide: Probable glycine dehydrogenase (decarboxylating) subunit 1 (448 aa).

Belongs to the GcvP family. N-terminal subunit subfamily. The glycine cleavage system is composed of four proteins: P, T, L and H. In this organism, the P 'protein' is a heterodimer of two subunits.

The enzyme catalyses N(6)-[(R)-lipoyl]-L-lysyl-[glycine-cleavage complex H protein] + glycine + H(+) = N(6)-[(R)-S(8)-aminomethyldihydrolipoyl]-L-lysyl-[glycine-cleavage complex H protein] + CO2. The glycine cleavage system catalyzes the degradation of glycine. The P protein binds the alpha-amino group of glycine through its pyridoxal phosphate cofactor; CO(2) is released and the remaining methylamine moiety is then transferred to the lipoamide cofactor of the H protein. In Bacillus pumilus (strain SAFR-032), this protein is Probable glycine dehydrogenase (decarboxylating) subunit 1.